A 199-amino-acid chain; its full sequence is Regulator of G-protein signaling 16 (199 aa).

Residues Cys-2 and Cys-12 are each lipidated (S-palmitoyl cysteine). Positions 64 to 180 constitute an RGS domain; it reads SFQSLLNSKN…LKSPAYRDLA (117 aa). A phosphotyrosine mark is found at Tyr-167 and Tyr-176.

Interacts with GNAI1 and GNAQ. Interacts with GNAI3, GNAI3 and GNAO1. In terms of processing, palmitoylated on Cys-2 and/or Cys-12. Phosphorylated. Phosphorylation at Tyr-167 by EGFR enhances GTPase accelerating (GAP) activity toward GNAI1. Predominantly found in the retina. Some expression has been found in the liver.

It localises to the membrane. Regulates G protein-coupled receptor signaling cascades. Inhibits signal transduction by increasing the GTPase activity of G protein alpha subunits, thereby driving them into their inactive GDP-bound form. Plays an important role in the phototransduction cascade by regulating the lifetime and effective concentration of activated transducin alpha. May regulate extra and intracellular mitogenic signals. The protein is Regulator of G-protein signaling 16 (Rgs16) of Rattus norvegicus (Rat).